Reading from the N-terminus, the 210-residue chain is MTNLNYQQTHFVMSAPDIRHLPSDTGIEVAFAGRSNAGKSSALNTLTNQKSLARTSKTPGRTQLINLFEVADGKRLVDLPGYGYAEVPEEMKRKWQRALGEYLEKRQSLQGLVVLMDIRHPLKDLDQQMIEWAVDSNIAVLVLLTKADKLASGARKAQLNMVREAVLAFNGDVQVETFSSLKKQGVDKLRQKLDTWFSEMQPVEETQDGE.

Positions 25–199 (TGIEVAFAGR…RQKLDTWFSE (175 aa)) constitute an EngB-type G domain. GTP contacts are provided by residues 33 to 40 (GRSNAGKS), 60 to 64 (GRTQL), 78 to 81 (DLPG), 145 to 148 (TKAD), and 178 to 180 (FSS). Residues S40 and T62 each coordinate Mg(2+).

It belongs to the TRAFAC class TrmE-Era-EngA-EngB-Septin-like GTPase superfamily. EngB GTPase family. Requires Mg(2+) as cofactor.

Its function is as follows. Necessary for normal cell division and for the maintenance of normal septation. This is Probable GTP-binding protein EngB from Escherichia coli O6:H1 (strain CFT073 / ATCC 700928 / UPEC).